Consider the following 301-residue polypeptide: Ribosomal RNA small subunit methyltransferase A (301 aa).

6 residues coordinate S-adenosyl-L-methionine: Asn18, Leu20, Gly45, Glu66, Asp91, and Asn112. A disordered region spans residues 267-301 (PPEAAPVKEKRRMAKNKMTEPANNNLNENSAPEVD). A compositionally biased stretch (polar residues) spans 287–301 (PANNNLNENSAPEVD).

It belongs to the class I-like SAM-binding methyltransferase superfamily. rRNA adenine N(6)-methyltransferase family. RsmA subfamily.

Its subcellular location is the cytoplasm. The enzyme catalyses adenosine(1518)/adenosine(1519) in 16S rRNA + 4 S-adenosyl-L-methionine = N(6)-dimethyladenosine(1518)/N(6)-dimethyladenosine(1519) in 16S rRNA + 4 S-adenosyl-L-homocysteine + 4 H(+). Functionally, specifically dimethylates two adjacent adenosines (A1518 and A1519) in the loop of a conserved hairpin near the 3'-end of 16S rRNA in the 30S particle. May play a critical role in biogenesis of 30S subunits. The sequence is that of Ribosomal RNA small subunit methyltransferase A from Colwellia psychrerythraea (strain 34H / ATCC BAA-681) (Vibrio psychroerythus).